Reading from the N-terminus, the 681-residue chain is Macrolide export ATP-binding/permease protein MacB (681 aa).

The 239-residue stretch at 6–244 (LKLAAVTRRF…FAEVGVGAAA (239 aa)) folds into the ABC transporter domain. 42–49 (GASGSGKS) is an ATP binding site. Over residues 246-273 (TETAADTRSAPASGDAPPPANNDTAADP) the composition is skewed to low complexity. The tract at residues 246–298 (TETAADTRSAPASGDAPPPANNDTAADPAPAPDASPPAPAVSPKHAGWRGSRS) is disordered. Residues 274–285 (APAPDASPPAPA) are compositionally biased toward pro residues. 4 helical membrane-spanning segments follow: residues 306–326 (CLTM…VAVG), 554–574 (LTLL…IGVM), 611–631 (LVCL…GALF), and 644–664 (AGAI…FGFM).

Belongs to the ABC transporter superfamily. Macrolide exporter (TC 3.A.1.122) family. In terms of assembly, homodimer.

The protein localises to the cell inner membrane. In terms of biological role, non-canonical ABC transporter that contains transmembrane domains (TMD), which form a pore in the inner membrane, and an ATP-binding domain (NBD), which is responsible for energy generation. Confers resistance against macrolides. This chain is Macrolide export ATP-binding/permease protein MacB, found in Burkholderia orbicola (strain AU 1054).